A 233-amino-acid chain; its full sequence is Small ribosomal subunit protein uS3 (233 aa).

A KH type-2 domain is found at valine 39–arginine 107.

The protein belongs to the universal ribosomal protein uS3 family. In terms of assembly, part of the 30S ribosomal subunit. Forms a tight complex with proteins S10 and S14.

Functionally, binds the lower part of the 30S subunit head. Binds mRNA in the 70S ribosome, positioning it for translation. In Photorhabdus laumondii subsp. laumondii (strain DSM 15139 / CIP 105565 / TT01) (Photorhabdus luminescens subsp. laumondii), this protein is Small ribosomal subunit protein uS3.